Reading from the N-terminus, the 212-residue chain is Adenylate kinase (212 aa).

10–15 (GAGKGT) provides a ligand contact to ATP. The segment at 30–59 (STGDMFRAAMANQTEMGRLAKSYIDKGELV) is NMP. AMP is bound by residues Thr-31, Arg-36, 57 to 59 (ELV), 86 to 89 (GYPR), and Gln-93. Residues 127 to 159 (GRIINRKTGETFHKVFNPPVDYKEEDYYQREDD) are LID. Residues Arg-128 and 137-138 (TF) contribute to the ATP site. Positions 156 and 167 each coordinate AMP. ATP is bound at residue Gln-195.

As to quaternary structure, monomer.

Its subcellular location is the cytoplasm. The enzyme catalyses AMP + ATP = 2 ADP. The protein operates within purine metabolism; AMP biosynthesis via salvage pathway; AMP from ADP: step 1/1. In terms of biological role, catalyzes the reversible transfer of the terminal phosphate group between ATP and AMP. Plays an important role in cellular energy homeostasis and in adenine nucleotide metabolism. The polypeptide is Adenylate kinase (Streptococcus pyogenes serotype M6 (strain ATCC BAA-946 / MGAS10394)).